Reading from the N-terminus, the 121-residue chain is Replication protein A 14 kDa subunit (121 aa).

Residue Val2 is modified to N-acetylvaline. Glycyl lysine isopeptide (Lys-Gly) (interchain with G-Cter in ubiquitin) cross-links involve residues Lys23, Lys39, and Lys88.

This sequence belongs to the replication factor A protein 3 family. Component of the canonical replication protein A complex (RPA), a heterotrimer composed of RPA1, RPA2 and RPA3. Also a component of the aRPA, the alternative replication protein A complex, a trimeric complex similar to the replication protein A complex/RPA but where RPA1 and RPA3 are associated with RPA4 instead of RPA2. Interacts with BRIP1/FANCJ via the RPA1 subunit; following DNA damage they colocalize in foci in the nucleus. Post-translationally, ubiquitinated by RFWD3 at stalled replication forks in response to DNA damage: ubiquitination by RFWD3 does not lead to degradation by the proteasome and promotes removal of the RPA complex from stalled replication forks, promoting homologous recombination.

Its subcellular location is the nucleus. In terms of biological role, as part of the heterotrimeric replication protein A complex (RPA/RP-A), binds and stabilizes single-stranded DNA intermediates that form during DNA replication or upon DNA stress. It prevents their reannealing and in parallel, recruits and activates different proteins and complexes involved in DNA metabolism. Thereby, it plays an essential role both in DNA replication and the cellular response to DNA damage. In the cellular response to DNA damage, the RPA complex controls DNA repair and DNA damage checkpoint activation. Through recruitment of ATRIP activates the ATR kinase a master regulator of the DNA damage response. It is required for the recruitment of the DNA double-strand break repair factors RAD51 and RAD52 to chromatin, in response to DNA damage. Also recruits to sites of DNA damage proteins like XPA and XPG that are involved in nucleotide excision repair and is required for this mechanism of DNA repair. Also plays a role in base excision repair (BER), probably through interaction with UNG. RPA stimulates 5'-3' helicase activity of BRIP1/FANCJ. Also recruits SMARCAL1/HARP, which is involved in replication fork restart, to sites of DNA damage. May also play a role in telomere maintenance. RPA3 has its own single-stranded DNA-binding activity and may be responsible for polarity of the binding of the complex to DNA. As part of the alternative replication protein A complex, aRPA, binds single-stranded DNA and probably plays a role in DNA repair. Compared to the RPA2-containing, canonical RPA complex, may not support chromosomal DNA replication and cell cycle progression through S-phase. The aRPA may not promote efficient priming by DNA polymerase alpha but could support DNA synthesis by polymerase delta in presence of PCNA and replication factor C (RFC), the dual incision/excision reaction of nucleotide excision repair and RAD51-dependent strand exchange. This is Replication protein A 14 kDa subunit (RPA3) from Homo sapiens (Human).